A 224-amino-acid chain; its full sequence is Ankyrin repeat domain-containing protein 45 (224 aa).

2 ANK repeats span residues 46-76 (VGRNALFAACMMGRSAIVRELVQNGAADVNE) and 80-109 (RGYSPLHCSAMWGQLDTLKTLVELNADFQA).

In terms of tissue distribution, widely expressed.

Its subcellular location is the cytoplasm. It localises to the midbody. The protein resides in the midbody ring. It is found in the cleavage furrow. In terms of biological role, may play a role during cell division. This is Ankyrin repeat domain-containing protein 45 from Danio rerio (Zebrafish).